Here is a 355-residue protein sequence, read N- to C-terminus: Hyaluronan and proteoglycan link protein 1 (355 aa).

Residues 1–9 constitute a propeptide that is removed on maturation; the sequence is MTSLLFLVL. N-linked (GlcNAc...) asparagine glycans are attached at residues asparagine 21 and asparagine 56. The region spanning 38–156 is the Ig-like V-type domain; it reads PRLLVVAEQA…EDDTAVVALN (119 aa). 5 cysteine pairs are disulfide-bonded: cysteine 61-cysteine 140, cysteine 182-cysteine 253, cysteine 206-cysteine 227, cysteine 280-cysteine 350, and cysteine 305-cysteine 326. 2 consecutive Link domains span residues 160–255 and 260–352; these read VVFP…FCFT and GRFY…YCFR.

It belongs to the HAPLN family.

Its subcellular location is the secreted. The protein localises to the extracellular space. It is found in the extracellular matrix. In terms of biological role, stabilizes the aggregates of proteoglycan monomers with hyaluronic acid in the extracellular cartilage matrix. This chain is Hyaluronan and proteoglycan link protein 1 (HAPLN1), found in Gallus gallus (Chicken).